Consider the following 41-residue polypeptide: Photosystem II reaction center protein X (41 aa).

Topologically, residues 2–6 are lumenal; sequence TITPS. Residues 7–29 traverse the membrane as a helical segment; the sequence is LKGFFIGLLSGAVVLGLTFAVLI. The Cytoplasmic segment spans residues 30-41; sequence AISQIDKVQRSL.

It belongs to the PsbX family. Type 1 subfamily. PSII is composed of 1 copy each of membrane proteins PsbA, PsbB, PsbC, PsbD, PsbE, PsbF, PsbH, PsbI, PsbJ, PsbK, PsbL, PsbM, PsbT, PsbX, PsbY, PsbZ, Psb30/Ycf12, peripheral proteins PsbO, CyanoQ (PsbQ), PsbU, PsbV and a large number of cofactors. It forms dimeric complexes. Part of a photosystem II (PSII) assembly intermediate complex PSII-I; crystallized from a strain deleted of psbJ, it forms monomeric PSII before addition of the oxygen evolving complex. PSII-I includes 3 assembly factors not found in mature PSII (Psb27, Psb28 and Psb34). The cofactor is PSII binds multiple chlorophylls, carotenoids and specific lipids..

The protein resides in the cellular thylakoid membrane. Functionally, involved in the binding and/or turnover of quinones at the Q(B) site of photosystem II (PSII). PSII is a light-driven water plastoquinone oxidoreductase, using light energy to abstract electrons from H(2)O, generating a proton gradient subsequently used for ATP formation. This chain is Photosystem II reaction center protein X, found in Thermosynechococcus vestitus (strain NIES-2133 / IAM M-273 / BP-1).